We begin with the raw amino-acid sequence, 78 residues long: Probable [Fe-S]-dependent transcriptional repressor (78 aa).

Cysteine 56, cysteine 61, cysteine 64, and cysteine 70 together coordinate iron-sulfur cluster.

Belongs to the FeoC family.

Functionally, may function as a transcriptional regulator that controls feoABC expression. The protein is Probable [Fe-S]-dependent transcriptional repressor of Escherichia coli (strain UTI89 / UPEC).